A 115-amino-acid polypeptide reads, in one-letter code: U3-lycotoxin-Ls1r (115 aa).

A signal peptide spans 1–20 (MKFVLLFGVLLVTLFSYSSA). Residues 21–44 (EMLDDFHQADEDELVSLIKKEEAR) constitute a propeptide that is removed on maturation. 4 disulfides stabilise this stretch: C48–C63, C55–C72, C62–C87, and C74–C85.

This sequence belongs to the neurotoxin 19 (CSTX) family. 01 subfamily. Expressed by the venom gland.

It is found in the secreted. This chain is U3-lycotoxin-Ls1r, found in Lycosa singoriensis (Wolf spider).